A 116-amino-acid polypeptide reads, in one-letter code: MDDPASYELDPSIAQRVKFNSAGLVPAVVQSTDGEVLMLAWMDAHALAYTIATRKGTYFSRSRNEYWIKGLTSGHTQQVTGLQLDCDGDTVLMTVVQQGGACHTGDRTCFDADVII.

Asp-85 serves as a coordination point for Mg(2+). Residue Cys-86 participates in Zn(2+) binding. Mg(2+) contacts are provided by Asp-87 and Asp-89. Residues Cys-102 and Cys-109 each contribute to the Zn(2+) site.

The protein belongs to the PRA-CH family. As to quaternary structure, homodimer. The cofactor is Mg(2+). Zn(2+) serves as cofactor.

The protein resides in the cytoplasm. The enzyme catalyses 1-(5-phospho-beta-D-ribosyl)-5'-AMP + H2O = 1-(5-phospho-beta-D-ribosyl)-5-[(5-phospho-beta-D-ribosylamino)methylideneamino]imidazole-4-carboxamide. It participates in amino-acid biosynthesis; L-histidine biosynthesis; L-histidine from 5-phospho-alpha-D-ribose 1-diphosphate: step 3/9. Its function is as follows. Catalyzes the hydrolysis of the adenine ring of phosphoribosyl-AMP. This Corynebacterium diphtheriae (strain ATCC 700971 / NCTC 13129 / Biotype gravis) protein is Phosphoribosyl-AMP cyclohydrolase.